Here is a 693-residue protein sequence, read N- to C-terminus: Polyribonucleotide nucleotidyltransferase (693 aa).

Residues D489 and D495 each coordinate Mg(2+). In terms of domain architecture, KH spans 556-615 (PQIHVMNINPAKIKDVVGRGGATVKGIVEKTGAQIDTSDSGEVKVFAKDKKSMDMAVAMI). The region spanning 625-693 (GQVYKGKIVK…GRVKLSLVAR (69 aa)) is the S1 motif domain.

This sequence belongs to the polyribonucleotide nucleotidyltransferase family. In terms of assembly, component of the RNA degradosome, which is a multiprotein complex involved in RNA processing and mRNA degradation. Mg(2+) serves as cofactor.

It localises to the cytoplasm. The enzyme catalyses RNA(n+1) + phosphate = RNA(n) + a ribonucleoside 5'-diphosphate. Its function is as follows. Involved in mRNA degradation. Catalyzes the phosphorolysis of single-stranded polyribonucleotides processively in the 3'- to 5'-direction. The protein is Polyribonucleotide nucleotidyltransferase of Francisella tularensis subsp. tularensis (strain WY96-3418).